A 224-amino-acid polypeptide reads, in one-letter code: uncharacterized protein (224 aa).

The signal sequence occupies residues 1–19 (MLRHITFTVFITTSMNTLA).

This sequence belongs to the periplasmic pilus chaperone family.

It localises to the periplasm. Could be required for the biogenesis of a putative fimbria. This is an uncharacterized protein from Escherichia coli (strain K12).